A 594-amino-acid chain; its full sequence is MESNHKSGDGLSGTQKEAALRALVQRTGYSLVQENGQRKYGGPPPGWDTTPPERGCEIFIGKLPRDLFEDELIPLCEKIGKIYEMRMMMDFNGNNRGYAFVTFSNKQEAKNAIKQLNNYEIRNGRLLGVCASVDNCRLFVGGIPKTKKREEILSEMKKVTEGVVDVIVYPSAADKTKNRGFAFVEYESHRAAAMARRRLLPGRIQLWGHPIAVDWAEPEVEVDEDTMSSVKILYVRNLMLSTSEEMIEKEFNSIKPGAVERVKKIRDYAFVHFSNREDAVEAMKALNGKVLDGSPIEVTLAKPVDKDSYVRYTRGTGGRNTMLQEYTYPLSHVYDPTTTYLGAPVFYTPQAYAAIPSLHFPATKGHLSNRALIRTPSVREIYMNVPVGAAGVRGLGGRGYLAYTGLGRGYQVKGDKRQDKLYDLLPGMELTPMNTISLKPQGVKLAPQILEEICQKNNWGQPVYQLHSAIGQDQRQLFLYKVTIPALASQNPAIHPFTPPKLSAYVDEAKRYAAEHTLQTLGIPTEGGDAGTTAPTATSATVFPGYAVPSATAPVSTAQLKQAVTLGQDLAAYTTYEVYPTFAVTTRGDGYGTF.

3 RRM domains span residues 56-134 (CEIF…ASVD), 136-218 (CRLF…WAEP), and 231-303 (KILY…LAKP). The segment at 359-408 (HFPATKGHLSNRALIRTPSVREIYMNVPVGAAGVRGLGGRGYLAYTGLGR) is required for nuclear localization. A Phosphothreonine modification is found at threonine 498.

In terms of assembly, part of the apolipoprotein B mRNA editing complex with APOBEC1. Interacts with TNPO2; TNPO2 may be responsible for transport of A1CF into the nucleus. Interacts with SYNCRIP. Interacts with CELF2/CUGBP2. Interacts with RBM47. In terms of tissue distribution, isoforms 1 and 2 are widely expressed while isoforms 3 and 4 are restricted to liver and small intestine.

The protein localises to the nucleus. Its subcellular location is the endoplasmic reticulum. It is found in the cytoplasm. Essential component of the apolipoprotein B mRNA editing enzyme complex which is responsible for the postranscriptional editing of a CAA codon for Gln to a UAA codon for stop in APOB mRNA. Binds to APOB mRNA and is probably responsible for docking the catalytic subunit, APOBEC1, to the mRNA to allow it to deaminate its target cytosine. The complex also seems to protect the edited APOB mRNA from nonsense-mediated decay. This is APOBEC1 complementation factor (A1cf) from Rattus norvegicus (Rat).